The primary structure comprises 158 residues: Trafficking protein particle complex subunit 6B (158 aa).

The protein belongs to the TRAPP small subunits family. BET3 subfamily. In terms of assembly, homodimer. Part of a TRAPP complex. Heterodimer with TRAPPC3. The heterodimer TRAPPC6B-TRAPPC3 interacts with TRAPPC1 likely providing a core for TRAPP complex formation. Widely expressed. Expressed in lung, heart, liver, spleen, brain and kidney.

Its subcellular location is the golgi apparatus. It localises to the cis-Golgi network. It is found in the endoplasmic reticulum. Component of a transport protein particle (TRAPP) complex that may function in specific stages of inter-organelle traffic. Specifically involved in the early development of neural circuitry, likely by controlling the frequency and amplitude of intracellular calcium transients implicated in the regulation of neuron differentiation and survival. The chain is Trafficking protein particle complex subunit 6B from Mus musculus (Mouse).